The chain runs to 154 residues: SsrA-binding protein (154 aa).

Belongs to the SmpB family.

The protein resides in the cytoplasm. Required for rescue of stalled ribosomes mediated by trans-translation. Binds to transfer-messenger RNA (tmRNA), required for stable association of tmRNA with ribosomes. tmRNA and SmpB together mimic tRNA shape, replacing the anticodon stem-loop with SmpB. tmRNA is encoded by the ssrA gene; the 2 termini fold to resemble tRNA(Ala) and it encodes a 'tag peptide', a short internal open reading frame. During trans-translation Ala-aminoacylated tmRNA acts like a tRNA, entering the A-site of stalled ribosomes, displacing the stalled mRNA. The ribosome then switches to translate the ORF on the tmRNA; the nascent peptide is terminated with the 'tag peptide' encoded by the tmRNA and targeted for degradation. The ribosome is freed to recommence translation, which seems to be the essential function of trans-translation. The protein is SsrA-binding protein of Enterococcus faecalis (strain ATCC 700802 / V583).